Reading from the N-terminus, the 11103-residue chain is Colossin-A (11103 aa).

The first 35 residues, Met-1–Ser-35, serve as a signal peptide directing secretion. N-linked (GlcNAc...) asparagine glycans are attached at residues Asn-95, Asn-120, Asn-137, and Asn-198. One copy of the Kelch 1 repeat lies at Asn-273–Gly-324. The CNA-B 1 domain occupies Ala-298 to Ala-359. Asn-372, Asn-386, and Asn-422 each carry an N-linked (GlcNAc...) asparagine glycan. The 47-residue stretch at Leu-423–Tyr-469 folds into the CNA-B 2 domain. N-linked (GlcNAc...) asparagine glycosylation is present at Asn-493. CNA-B domains are found at residues Leu-551 to Tyr-599, Val-676 to Thr-745, Ala-803 to Asn-871, Ala-931 to Ser-999, Leu-1057 to Tyr-1095, and Leu-1170 to Ser-1231. The N-linked (GlcNAc...) asparagine glycan is linked to Asn-678. Asn-1059, Asn-1229, and Asn-1239 each carry an N-linked (GlcNAc...) asparagine glycan. Positions Ile-1277 to Tyr-1314 constitute a CNA-B 9 domain. Residue Asn-1329 is glycosylated (N-linked (GlcNAc...) asparagine). CNA-B domains lie at Ser-1391–Thr-1458, Leu-1494–Tyr-1530, Leu-1602–Val-1651, Leu-1708–Lys-1779, Ser-1824–Thr-1891, Leu-1927–Tyr-1963, Leu-2035–Gln-2086, and Val-2141–Tyr-2177. Asn-1613 carries an N-linked (GlcNAc...) asparagine glycan. The tract at residues Thr-1716 to Pro-1740 is disordered. Asn-1759 and Asn-1772 each carry an N-linked (GlcNAc...) asparagine glycan. Residue Asn-2046 is glycosylated (N-linked (GlcNAc...) asparagine). N-linked (GlcNAc...) asparagine glycans are attached at residues Asn-2192 and Asn-2311. 8 consecutive CNA-B domains span residues Ser-2254–Thr-2321, Leu-2357–Gly-2402, Leu-2465–Val-2514, Leu-2571–Thr-2640, Ser-2687–Thr-2754, Leu-2790–Gly-2835, Leu-2898–Val-2947, and Leu-3004–Tyr-3040. A glycan (N-linked (GlcNAc...) asparagine) is linked at Asn-2476. Residues Asp-2580–Pro-2603 are disordered. N-linked (GlcNAc...) asparagine glycosylation occurs at Asn-2622. N-linked (GlcNAc...) asparagine glycans are attached at residues Asn-2801 and Asn-2909. Asn-3048, Asn-3055, and Asn-3118 each carry an N-linked (GlcNAc...) asparagine glycan. CNA-B domains follow at residues Ser-3117 to Thr-3184, Leu-3220 to Tyr-3256, Leu-3328 to Tyr-3364, and Val-3434 to Tyr-3470. Asn-3339 is a glycosylation site (N-linked (GlcNAc...) asparagine). N-linked (GlcNAc...) asparagine glycosylation occurs at Asn-3485. The Kelch 2 repeat unit spans residues Ser-3503 to Val-3549. 3 consecutive CNA-B domains span residues Ser-3547 to Thr-3614, Leu-3650 to Tyr-3686, and Leu-3758 to Gln-3809. 2 N-linked (GlcNAc...) asparagine glycosylation sites follow: Asn-3769 and Asn-3827. One can recognise a CNA-B 33 domain in the interval Leu-3864–Tyr-3900. N-linked (GlcNAc...) asparagine glycosylation is present at Asn-3915. 8 consecutive CNA-B domains span residues Ser-3980–Thr-4047, Leu-4083–Gly-4128, Leu-4191–Val-4240, Leu-4297–Thr-4378, Ser-4425–Thr-4492, Leu-4528–Gly-4573, Leu-4636–Val-4685, and Val-4742–Tyr-4778. An N-linked (GlcNAc...) asparagine glycan is attached at Asn-4202. The tract at residues Asn-4286–Pro-4341 is disordered. The span at Leu-4304–Gly-4321 shows a compositional bias: basic and acidic residues. Asn-4360 carries N-linked (GlcNAc...) asparagine glycosylation. Asn-4647 carries an N-linked (GlcNAc...) asparagine glycan. Asn-4792 and Asn-4918 each carry an N-linked (GlcNAc...) asparagine glycan. 4 consecutive CNA-B domains span residues Ile-4865–Thr-4928, Leu-4964–Gly-5009, Leu-5072–Gln-5123, and Leu-5178–Tyr-5214. An N-linked (GlcNAc...) asparagine glycan is attached at Asn-5083. N-linked (GlcNAc...) asparagine glycosylation is found at Asn-5229, Asn-5292, and Asn-5348. The Kelch 3 repeat unit spans residues Ser-5247 to Val-5293. 4 CNA-B domains span residues Ser-5291–Thr-5358, Leu-5394–Tyr-5430, Leu-5502–Gln-5553, and Leu-5608–Tyr-5644. The N-linked (GlcNAc...) asparagine glycan is linked to Asn-5513. A glycan (N-linked (GlcNAc...) asparagine) is linked at Asn-5659. 4 CNA-B domains span residues Ser-5724–Thr-5791, Leu-5827–Gly-5872, Leu-5935–Val-5984, and Val-6041–Tyr-6077. Asn-5946 carries an N-linked (GlcNAc...) asparagine glycan. N-linked (GlcNAc...) asparagine glycans are attached at residues Asn-6092 and Asn-6155. CNA-B domains lie at Ser-6154 to Thr-6221, Leu-6257 to Gly-6302, Leu-6365 to Gln-6416, and Leu-6471 to Tyr-6507. The N-linked (GlcNAc...) asparagine glycan is linked to Asn-6376. 2 N-linked (GlcNAc...) asparagine glycosylation sites follow: Asn-6522 and Asn-6535. CNA-B domains are found at residues Ser-6587–Thr-6654, Leu-6690–Tyr-6726, Leu-6798–Gln-6849, and Val-6904–Tyr-6940. Residues Asn-6701, Asn-6809, and Asn-6848 are each glycosylated (N-linked (GlcNAc...) asparagine). N-linked (GlcNAc...) asparagine glycosylation is found at Asn-6954, Asn-7080, Asn-7137, and Asn-7245. CNA-B domains lie at Ser-7023–Thr-7090, Leu-7126–Gly-7171, Leu-7234–Gln-7285, Leu-7340–Lys-7411, Ser-7456–Thr-7523, Leu-7559–Tyr-7596, Leu-7668–Gln-7719, and Val-7774–Tyr-7810. The disordered stretch occupies residues Asp-7351–Pro-7372. N-linked (GlcNAc...) asparagine glycans are attached at residues Asn-7391 and Asn-7404. N-linked (GlcNAc...) asparagine glycosylation occurs at Asn-7679. N-linked (GlcNAc...) asparagine glycans are attached at residues Asn-7825 and Asn-7837. 7 consecutive CNA-B domains span residues Ser-7887 to Thr-7954, Leu-7990 to Gly-8035, Leu-8098 to Gln-8149, Ile-8204 to Ser-8265, Val-8313 to Gln-8374, Leu-8420 to Tyr-8456, and Leu-8528 to Ser-8587. N-linked (GlcNAc...) asparagine glycosylation is found at Asn-8109 and Asn-8255. Residues Asn-8441, Asn-8539, Asn-8629, Asn-8636, Asn-8655, Asn-8693, Asn-8753, Asn-8811, Asn-8896, Asn-8930, Asn-8976, Asn-9023, Asn-9073, Asn-9087, Asn-9123, Asn-9137, Asn-9146, Asn-9149, Asn-9186, Asn-9297, Asn-9305, Asn-9349, Asn-9409, Asn-9419, Asn-9533, Asn-9543, Asn-9556, Asn-9601, Asn-9709, Asn-9718, Asn-9786, Asn-9839, Asn-9850, Asn-9867, Asn-9891, Asn-9941, Asn-9957, Asn-9989, Asn-10042, Asn-10096, Asn-10111, Asn-10174, Asn-10267, Asn-10315, Asn-10348, Asn-10360, Asn-10379, Asn-10394, Asn-10431, Asn-10477, Asn-10552, Asn-10581, Asn-10715, Asn-10786, Asn-10802, Asn-10943, and Asn-11018 are each glycosylated (N-linked (GlcNAc...) asparagine). A Kelch 4 repeat occupies Cys-8592 to Thr-8638. Residues Val-8634–Tyr-8680 form the CNA-B 77 domain. The CNA-B 78 domain maps to Leu-8751 to Thr-8810. The 50-residue stretch at Leu-8965–Val-9014 folds into the CNA-B 79 domain. The CNA-B 80 domain occupies Val-9071–Tyr-9107. Positions Ala-9185–Tyr-9220 constitute a CNA-B 81 domain. In terms of domain architecture, CNA-B 82 spans Thr-9299–Tyr-9332. 2 consecutive CNA-B domains span residues Leu-9407–Phe-9447 and Met-9531–Tyr-9569. The 70-residue stretch at Val-9659–Ser-9728 folds into the CNA-B 85 domain. The CNA-B 86 domain maps to Thr-10044–Val-10103. The 65-residue stretch at Leu-10172–Ser-10236 folds into the CNA-B 87 domain. Positions Pro-10313–Gly-10370 constitute a CNA-B 88 domain.

Belongs to the serine-aspartate repeat-containing protein (SDr) family.

The protein resides in the secreted. In Dictyostelium discoideum (Social amoeba), this protein is Colossin-A (colA).